Consider the following 65-residue polypeptide: Large ribosomal subunit protein bL35 (65 aa).

The protein belongs to the bacterial ribosomal protein bL35 family.

This is Large ribosomal subunit protein bL35 from Aeromonas salmonicida (strain A449).